A 179-amino-acid polypeptide reads, in one-letter code: Cytochrome b6-f complex iron-sulfur subunit (179 aa).

Residues 21–43 (LLTFGTVTGVALGALYPVVKYFI) traverse the membrane as a helical segment. The region spanning 61-162 (GNDVSLSKFL…ANTVDDKIIL (102 aa)) is the Rieske domain. The [2Fe-2S] cluster site is built by Cys-108, His-110, Cys-126, and His-129. An intrachain disulfide couples Cys-113 to Cys-128.

The protein belongs to the Rieske iron-sulfur protein family. As to quaternary structure, the 4 large subunits of the cytochrome b6-f complex are cytochrome b6, subunit IV (17 kDa polypeptide, PetD), cytochrome f and the Rieske protein, while the 4 small subunits are PetG, PetL, PetM and PetN. The complex functions as a dimer. The cofactor is [2Fe-2S] cluster.

It is found in the cellular thylakoid membrane. It carries out the reaction 2 oxidized [plastocyanin] + a plastoquinol + 2 H(+)(in) = 2 reduced [plastocyanin] + a plastoquinone + 4 H(+)(out). Functionally, component of the cytochrome b6-f complex, which mediates electron transfer between photosystem II (PSII) and photosystem I (PSI), cyclic electron flow around PSI, and state transitions. The sequence is that of Cytochrome b6-f complex iron-sulfur subunit from Desmonostoc sp. (strain PCC 7906) (Nostoc sp. (strain PCC 7906)).